Here is a 340-residue protein sequence, read N- to C-terminus: Uroporphyrinogen decarboxylase (340 aa).

Substrate-binding positions include 21-25 (RQAGR), aspartate 71, tyrosine 148, serine 203, and histidine 316.

The protein belongs to the uroporphyrinogen decarboxylase family. As to quaternary structure, homodimer.

The protein localises to the cytoplasm. It carries out the reaction uroporphyrinogen III + 4 H(+) = coproporphyrinogen III + 4 CO2. The protein operates within porphyrin-containing compound metabolism; protoporphyrin-IX biosynthesis; coproporphyrinogen-III from 5-aminolevulinate: step 4/4. In terms of biological role, catalyzes the decarboxylation of four acetate groups of uroporphyrinogen-III to yield coproporphyrinogen-III. In Campylobacter jejuni subsp. jejuni serotype O:23/36 (strain 81-176), this protein is Uroporphyrinogen decarboxylase.